A 206-amino-acid chain; its full sequence is Large ribosomal subunit protein uL4 (206 aa).

Residues 47 to 94 (NRAQKGRAEVSKSTRKPWRQKGTGRARAGMASSPLWRGGGRVFPNSPE) are disordered. Residues 59–70 (STRKPWRQKGTG) show a composition bias toward basic residues.

Belongs to the universal ribosomal protein uL4 family. In terms of assembly, part of the 50S ribosomal subunit.

In terms of biological role, one of the primary rRNA binding proteins, this protein initially binds near the 5'-end of the 23S rRNA. It is important during the early stages of 50S assembly. It makes multiple contacts with different domains of the 23S rRNA in the assembled 50S subunit and ribosome. Its function is as follows. Forms part of the polypeptide exit tunnel. The sequence is that of Large ribosomal subunit protein uL4 from Aromatoleum aromaticum (strain DSM 19018 / LMG 30748 / EbN1) (Azoarcus sp. (strain EbN1)).